The primary structure comprises 343 residues: Olfactory receptor 1E3 (343 aa).

Over 1–28 the chain is Extracellular; that stretch reads MMKKNQTMISEFLLLGLPIQPEQQNLFY. N-linked (GlcNAc...) asparagine glycosylation is present at Asn-5. Residues 29–49 form a helical membrane-spanning segment; the sequence is ALFLAVYLTTLLGNLLVIVLI. The Cytoplasmic portion of the chain corresponds to 50-107; that stretch reads RLDSHLHMPMYLCLSNLSFSDLCFSSVTMPKLLQNMQSQNPSIPFADCLAQMYFHLFY. Cys-97 and Cys-179 form a disulfide bridge. The helical transmembrane segment at 108–128 threads the bilayer; that stretch reads GVLESFLLVVMAYHCYVAICF. Residues 129–141 lie on the Extracellular side of the membrane; it reads PLHYTTIMSPKCC. A helical membrane pass occupies residues 142–162; it reads LGLLTLSWLLTTAHATLHTLL. Residues 163 to 195 are Cytoplasmic-facing; it reads MARLSFCAENVIPHFFCDTSTLLKLACSNTQVN. A helical transmembrane segment spans residues 196-216; it reads GWVMFFMGGLILVIPFLLLIM. Over 217 to 242 the chain is Extracellular; sequence SCARIVSTILRVPSTGGIQKAFSTCG. Residues 243–263 traverse the membrane as a helical segment; sequence PHLSVVSLFYGTIIGLYLCPL. Over 264–271 the chain is Cytoplasmic; the sequence is TNHNTVKD. Residues 272–292 traverse the membrane as a helical segment; the sequence is TVMAVMYTGVTHMLNPFIYSL. Topologically, residues 293–310 are extracellular; sequence RNRDMRGNPGQSLQHKEN. Residues 311–331 form a helical membrane-spanning segment; it reads FFVFKIVIVGILPLLNLVGVV. Residues 332 to 343 are Cytoplasmic-facing; the sequence is KLIMKYHSKSVA.

Belongs to the G-protein coupled receptor 1 family.

Its subcellular location is the cell membrane. Odorant receptor. The sequence is that of Olfactory receptor 1E3 (OR1E3) from Homo sapiens (Human).